The primary structure comprises 327 residues: Thioredoxin reductase (327 aa).

FAD is bound by residues 10–13 (SGPA), 39–40 (IA), Gln-44, Asn-53, Val-86, Cys-143, Asp-286, and 293–295 (RQA). An intrachain disulfide couples Cys-140 to Cys-143.

The protein belongs to the class-II pyridine nucleotide-disulfide oxidoreductase family. In terms of assembly, homodimer. It depends on FAD as a cofactor.

The protein localises to the cytoplasm. The catalysed reaction is [thioredoxin]-dithiol + NADP(+) = [thioredoxin]-disulfide + NADPH + H(+). Functionally, component of the thioredoxin-thioredoxin reductase system which may be involved in biosynthesis of penicillins and cephalosporins and may be important in determining the thiol-disulfide redox balance. The chain is Thioredoxin reductase (TRR1) from Pneumocystis jirovecii (Human pneumocystis pneumonia agent).